The primary structure comprises 359 residues: Transcription factor bHLH130 (359 aa).

Position 60 is a phosphoserine (Ser-60). Positions 161 to 186 (EEDEESPSNSNGLRRHCSLSSRPPSS) are disordered. Polar residues predominate over residues 167–184 (PSNSNGLRRHCSLSSRPP). In terms of domain architecture, bHLH spans 285-335 (CATHPRSIAERVRRTRISERMRKLQELVPNMDKQTNTSDMLDLAVDYIKDL).

As to quaternary structure, homodimer.

Its subcellular location is the nucleus. The sequence is that of Transcription factor bHLH130 (BHLH130) from Arabidopsis thaliana (Mouse-ear cress).